Here is a 730-residue protein sequence, read N- to C-terminus: MQGLAFLAALACWRCISLTCGATGALPTTATTITRSATQLINGRTNLSIELEFNGTSFFLNWQNLLNVITEPALTELWTSAEVAEDLRVTLKKRQSLFFPNKTVVISGDGHRYTCEVPTSSQTYNITKGFNYSALPGHLGGFGINARLVLGDIFASKWSLFARDTPEYRVFYPMNVMAVKFSISIGNNESGVALYGVVSEDFVVVTLHNRSKEANETASHLLFGLPDSLPSLKGHATYDELTFARNAKYALVAILPKDSYQTLLTENYTRIFLNMTESTPLEFTRTIQTRIVSIEARRACAAQEAAPDIFLVLFQMLVAHFLVARGIAEHRFVEVDCVCRQYAELYFLRRISRLCMPTFTTVGYNHTTLGAVAATQIARVSATKLASLPRSSQETVLAMVQLGARDGAVPSSILEGIAMVVEHMYTAYTYVYTLGDTERKLMLDIHTVLTDSCPPKDSGVSEKLLRTYLMFTSMCTNIELGEMIARFSKPDSLNIYRAFSPCFLGLRYDLHPAKLRAEAPQSSALTRTAVARGTSGFAELLHALHLDSLNLIPAINCSKITADKIIATVPLPHVTYIISSEALSNAVVYEVSEIFLKSAMFISAIKPDCSGFNFSQIDRHIPIVYNISTPRRGCPLCDSVIMSYDESDGLQSLMYVTNERVQTNLFLDKSPFFDNNNLHIHYLWLRDNGTVVEIRGMYRRRAASALFLILSFIGFSGVIYFLYRLFSILY.

The signal sequence occupies residues 1-21 (MQGLAFLAALACWRCISLTCG). The Virion surface segment spans residues 22–706 (ATGALPTTAT…MYRRRAASAL (685 aa)). 15 N-linked (GlcNAc...) asparagine; by host glycosylation sites follow: Asn-46, Asn-54, Asn-101, Asn-125, Asn-131, Asn-188, Asn-209, Asn-215, Asn-267, Asn-274, Asn-365, Asn-556, Asn-613, Asn-626, and Asn-688. The interaction with gL stretch occupies residues 190–254 (SGVALYGVVS…RNAKYALVAI (65 aa)). A helical membrane pass occupies residues 707-727 (FLILSFIGFSGVIYFLYRLFS). The Intravirion segment spans residues 728–730 (ILY).

It belongs to the herpesviridae glycoprotein H family. As to quaternary structure, interacts with glycoprotein L (gL); this interaction is necessary for the correct processing and cell surface expression of gH. The heterodimer gH/gL seems to interact with gB trimers during fusion. When in complex with gL, interacts with host EPHA2; this interaction triggers EPHA2 phosphorylation and endocytosis allowing KSHV entry. N-glycosylated, O-glycosylated, and sialylated.

The protein resides in the virion membrane. Its subcellular location is the host cell membrane. It localises to the host endosome membrane. The heterodimer glycoprotein H-glycoprotein L is required for the fusion of viral and plasma membranes leading to virus entry into the host cell. Following initial binding to host receptor, membrane fusion is mediated by the fusion machinery composed of gB and the heterodimer gH/gL. May also be involved in the fusion between the virion envelope and the outer nuclear membrane during virion morphogenesis. Targets host EPHA2 to promote KSHV entry. In Homo sapiens (Human), this protein is Envelope glycoprotein H.